A 295-amino-acid chain; its full sequence is GTPase Era (295 aa).

An Era-type G domain is found at 5–172 (YCGYAAIIGR…EQAVHQLMPE (168 aa)). The tract at residues 13–20 (GRPNVGKS) is G1. Position 13 to 20 (13 to 20 (GRPNVGKS)) interacts with GTP. The segment at 39–43 (QTTRY) is G2. The G3 stretch occupies residues 60 to 63 (DTPG). GTP is bound by residues 60–64 (DTPGL) and 121–124 (NKVD). Residues 121 to 124 (NKVD) form a G4 region. The segment at 151 to 153 (LSA) is G5. A KH type-2 domain is found at 203 to 279 (LGQEIPYSLA…FLQLWVKVKS (77 aa)).

Belongs to the TRAFAC class TrmE-Era-EngA-EngB-Septin-like GTPase superfamily. Era GTPase family. In terms of assembly, monomer.

It is found in the cytoplasm. It localises to the cell inner membrane. An essential GTPase that binds both GDP and GTP, with rapid nucleotide exchange. Plays a role in 16S rRNA processing and 30S ribosomal subunit biogenesis and possibly also in cell cycle regulation and energy metabolism. The chain is GTPase Era from Coxiella burnetii (strain CbuK_Q154) (Coxiella burnetii (strain Q154)).